We begin with the raw amino-acid sequence, 875 residues long: Probable ubiquitin carboxyl-terminal hydrolase 7 (875 aa).

The UBP-type zinc finger occupies 54-167 (KECSHLKKGV…RDVQQFICSN (114 aa)). Zn(2+) is bound by residues Cys56, His58, Cys83, Cys86, Cys101, Cys104, Cys109, His116, His120, His127, Cys140, and Cys143. A USP domain is found at 208–875 (PGLKNLGATC…EAYMLFYERV (668 aa)). Cys217 acts as the Nucleophile in catalysis. 2 positions are modified to phosphoserine: Ser333 and Ser337. Residues 396 to 486 (YSKELSQSSD…ASPKKEVLKS (91 aa)) form a disordered region. Residues 401–438 (SQSSDSSQHQHDSFLPANSSPLAASSTKSLPSSELLDS) show a composition bias toward low complexity. The segment covering 473 to 484 (NHEEASPKKEVL) has biased composition (basic and acidic residues). Ser486 and Ser493 each carry phosphoserine. A compositionally biased stretch (basic residues) spans 575 to 586 (RSRFSRSPKKSS). A disordered region spans residues 575 to 628 (RSRFSRSPKKSSVKIVVDNANDDTDQAPTTNSSSLNENLLGGHASENDKSLKQS). Residues 600 to 611 (QAPTTNSSSLNE) show a composition bias toward polar residues. Phosphoserine is present on Ser645. His812 serves as the catalytic Proton acceptor.

It belongs to the peptidase C19 family.

The enzyme catalyses Thiol-dependent hydrolysis of ester, thioester, amide, peptide and isopeptide bonds formed by the C-terminal Gly of ubiquitin (a 76-residue protein attached to proteins as an intracellular targeting signal).. This chain is Probable ubiquitin carboxyl-terminal hydrolase 7 (ubp7), found in Schizosaccharomyces pombe (strain 972 / ATCC 24843) (Fission yeast).